The primary structure comprises 293 residues: Putative immediate early glycoprotein (293 aa).

Positions 1-21 (MKKLTMESLSVYIFVMGVCFT) are cleaved as a signal peptide. N-linked (GlcNAc...) asparagine; by host glycans are attached at residues Asn-23, Asn-55, Asn-83, Asn-120, Asn-150, Asn-156, Asn-168, Asn-212, and Asn-249. Residues 262–282 (LFFLAGGAFTMLLLLCCLSMI) traverse the membrane as a helical segment.

It belongs to the herpesviridae immediate early glycoprotein family.

It localises to the membrane. The sequence is that of Putative immediate early glycoprotein (U18) from Human herpesvirus 6A (strain Uganda-1102) (HHV-6 variant A).